Reading from the N-terminus, the 25-residue chain is Ocellatin-L1 (25 aa).

The residue at position 25 (Leu-25) is a Leucine amide.

It belongs to the frog skin active peptide (FSAP) family. Ocellatin subfamily. In terms of tissue distribution, expressed by the skin glands.

It localises to the secreted. Functionally, antimicrobial peptide with activity against Gram-negative bacteria but without activity against Gram-positive bacteria. Shows a low activity in stimulating insulin release from rat BRIN-BD11 beta cells, and acts without loss of integrity of the plasma membrane. Has very low hemolytic activity. Shows weak amphipathicity in its alpha-helical conformation. The protein is Ocellatin-L1 of Leptodactylus laticeps (Santa Fe frog).